Here is a 167-residue protein sequence, read N- to C-terminus: MITVATAECFTHANIGLTIHKAAAGYEDFEFKYLFSEEDLKLMKNVRVISAMFVPSIIGVEKLLDIKLPEPDFNYKYAKAYSEEKDLEVAKLMAEGLKKKLNVNISIGSTAGVGRGAICILTDNNRYLFTSDVYANLITFENIKERQKNGIEKGIKRFLEILKKEYF.

Belongs to the UPF0254 family.

The sequence is that of UPF0254 protein MJ1251 from Methanocaldococcus jannaschii (strain ATCC 43067 / DSM 2661 / JAL-1 / JCM 10045 / NBRC 100440) (Methanococcus jannaschii).